Reading from the N-terminus, the 1115-residue chain is Carbamoyl phosphate synthase large chain (1115 aa).

The carboxyphosphate synthetic domain stretch occupies residues 1 to 407 (MPRRTDLHHV…ALGKVMRSLE (407 aa)). ATP contacts are provided by R134, R174, G180, G181, E213, I215, E220, G246, V247, H248, Q290, and E304. The 196-residue stretch at 138–333 (KDIVAKAGGE…IAKIAAKLAI (196 aa)) folds into the ATP-grasp 1 domain. Positions 290, 304, and 306 each coordinate Mg(2+). Positions 290, 304, and 306 each coordinate Mn(2+). Residues 408–559 (TTRAGFWTAP…ELDPAAETEV (152 aa)) form an oligomerization domain region. Residues 560-965 (APQTERPKVL…AFAKSQTAAY (406 aa)) form a carbamoyl phosphate synthetic domain region. In terms of domain architecture, ATP-grasp 2 spans 693-884 (GDLLSAAGLP…LAKACARIML (192 aa)). Positions 729, 768, 770, 775, 800, 801, 802, 803, 843, and 855 each coordinate ATP. Mg(2+)-binding residues include Q843, E855, and N857. The Mn(2+) site is built by Q843, E855, and N857. The MGS-like domain maps to 966 to 1113 (GSLPAQGTVF…QELHRVIGGV (148 aa)). Residues 966-1115 (GSLPAQGTVF…LHRVIGGVER (150 aa)) are allosteric domain.

Belongs to the CarB family. Composed of two chains; the small (or glutamine) chain promotes the hydrolysis of glutamine to ammonia, which is used by the large (or ammonia) chain to synthesize carbamoyl phosphate. Tetramer of heterodimers (alpha,beta)4. Mg(2+) is required as a cofactor. Mn(2+) serves as cofactor.

It carries out the reaction hydrogencarbonate + L-glutamine + 2 ATP + H2O = carbamoyl phosphate + L-glutamate + 2 ADP + phosphate + 2 H(+). It catalyses the reaction hydrogencarbonate + NH4(+) + 2 ATP = carbamoyl phosphate + 2 ADP + phosphate + 2 H(+). It participates in amino-acid biosynthesis; L-arginine biosynthesis; carbamoyl phosphate from bicarbonate: step 1/1. It functions in the pathway pyrimidine metabolism; UMP biosynthesis via de novo pathway; (S)-dihydroorotate from bicarbonate: step 1/3. Large subunit of the glutamine-dependent carbamoyl phosphate synthetase (CPSase). CPSase catalyzes the formation of carbamoyl phosphate from the ammonia moiety of glutamine, carbonate, and phosphate donated by ATP, constituting the first step of 2 biosynthetic pathways, one leading to arginine and/or urea and the other to pyrimidine nucleotides. The large subunit (synthetase) binds the substrates ammonia (free or transferred from glutamine from the small subunit), hydrogencarbonate and ATP and carries out an ATP-coupled ligase reaction, activating hydrogencarbonate by forming carboxy phosphate which reacts with ammonia to form carbamoyl phosphate. This Mycobacterium bovis (strain ATCC BAA-935 / AF2122/97) protein is Carbamoyl phosphate synthase large chain.